The following is an 883-amino-acid chain: Phosphoenolpyruvate carboxylase (883 aa).

Active-site residues include His138 and Lys546.

It belongs to the PEPCase type 1 family. As to quaternary structure, homotetramer. Mg(2+) serves as cofactor.

It carries out the reaction oxaloacetate + phosphate = phosphoenolpyruvate + hydrogencarbonate. With respect to regulation, the enzyme has distinct binding sites for each of the allosteric effectors such as acetyl-CoA, fructose 1,6-bisphosphate, guanosine 3'-diphosphate 5'-diphosphate, long chain fatty acids, and L-aspartate. Forms oxaloacetate, a four-carbon dicarboxylic acid source for the tricarboxylic acid cycle. The sequence is that of Phosphoenolpyruvate carboxylase from Escherichia coli O157:H7.